Here is a 72-residue protein sequence, read N- to C-terminus: MSRRKVCRFTVEGVKEIDYKDVNKLKAYITETGKIVPSRVTGTSAKYQRQLATAIKRARFLALLPYCDRHFN.

The protein belongs to the bacterial ribosomal protein bS18 family. Part of the 30S ribosomal subunit. Forms a tight heterodimer with protein bS6.

Its function is as follows. Binds as a heterodimer with protein bS6 to the central domain of the 16S rRNA, where it helps stabilize the platform of the 30S subunit. The chain is Small ribosomal subunit protein bS18 from Francisella tularensis subsp. novicida (strain U112).